A 762-amino-acid chain; its full sequence is Putative cation exchanger YDL206W (762 aa).

The first 26 residues, 1-26 (MHKPLRWLITIAFYVSNVILIGYSLS), serve as a signal peptide directing secretion. The Extracellular portion of the chain corresponds to 27–30 (SNGS). The N-linked (GlcNAc...) asparagine glycan is linked to asparagine 28. A helical membrane pass occupies residues 31 to 51 (ISEFYLHSVVLIECFSLLGVV). The Cytoplasmic segment spans residues 52–102 (TSDCLTPSLSYISSNIFHISDRVSGMTLLALGNALPDITSTYQSMKSGVTS). The chain crosses the membrane as a helical span at residues 103-123 (LAIGELFGGIFFLLTVVIGLM). Over 124–156 (GCVATIQFQHDKSIETYTEESFDQNLSYDRSNY) the chain is Extracellular. Asparagine 148 carries N-linked (GlcNAc...) asparagine glycosylation. The chain crosses the membrane as a helical span at residues 157–177 (ILDVGIFTFMLLVSGTFLADG). Arginine 178 is a topological domain (cytoplasmic). Residues 179 to 199 (LYFWECIVMVLTYCCCAVYLI) traverse the membrane as a helical segment. At 200-501 (KSYKYPCEIN…YNYLTDVSLE (302 aa)) the chain is on the extracellular side. Residues asparagine 280 and asparagine 329 are each glycosylated (N-linked (GlcNAc...) asparagine). A helical transmembrane segment spans residues 502–522 (IGFFEFLSLLVTTPVSIILYL). Topologically, residues 523 to 554 (SIPSEISQTDHDLPLSYLQNIQLIASPIILNQ) are cytoplasmic. Residues 555–575 (LITNNFSFWLLILSLVIAILL) traverse the membrane as a helical segment. At 576 to 589 (YFKTRTIPNKFNSD) the chain is on the extracellular side. The chain crosses the membrane as a helical span at residues 590-610 (IIFTVAFLLSLACLSKAVHII). Topologically, residues 611-615 (VVTLT) are cytoplasmic. The chain crosses the membrane as a helical span at residues 616–636 (HWINVFNISETILGLTIFTWG). The Extracellular portion of the chain corresponds to 637 to 650 (NSIGDLVSNITFVK). Asparagine 645 carries N-linked (GlcNAc...) asparagine glycosylation. Residues 651 to 671 (IGVLEIAIGACFGSPLLYFLF) form a helical membrane-spanning segment. Topologically, residues 672–709 (GVGFDGIMIMLGDKTGKIVSGRDSNILMHHIDFKVDKN) are cytoplasmic. Residues 710-730 (LINTGVGILIAFLIFTVLIPL) form a helical membrane-spanning segment. Topologically, residues 731–738 (NDWKIDKK) are extracellular. The helical transmembrane segment at 739–759 (ISIALLTLYIVVTCISVFLEV) threads the bilayer. The Cytoplasmic portion of the chain corresponds to 760–762 (HQV).

Belongs to the Ca(2+):cation antiporter (CaCA) (TC 2.A.19) family.

It is found in the membrane. Putative cation exchanger. This is Putative cation exchanger YDL206W from Saccharomyces cerevisiae (strain ATCC 204508 / S288c) (Baker's yeast).